The following is a 20-amino-acid chain: Phospholipase A2 D5 (20 aa).

Requires Ca(2+) as cofactor. In terms of processing, contains seven disulfide bonds. In terms of tissue distribution, expressed by the venom gland.

It is found in the secreted. The catalysed reaction is a 1,2-diacyl-sn-glycero-3-phosphocholine + H2O = a 1-acyl-sn-glycero-3-phosphocholine + a fatty acid + H(+). PLA2 catalyzes the calcium-dependent hydrolysis of the 2-acyl groups in 3-sn-phosphoglycerides. The polypeptide is Phospholipase A2 D5 (Micrurus pyrrhocryptus (Coral snake)).